A 773-amino-acid chain; its full sequence is Carnitine O-palmitoyltransferase 1, liver isoform (773 aa).

A2 carries the N-acetylalanine modification. Topologically, residues 2-47 are cytoplasmic; sequence AEAHQAVAFQFTVTPDGIDLRLSHEALKQICLSGLHSWKKKFIRFK. Residues 48 to 73 traverse the membrane as a helical segment; it reads NGIITGVFPANPSSWLIVVVGVISSM. At 74–102 the chain is on the mitochondrial intermembrane side; it reads HAKVDPSLGMIAKISRTLDTTGRMSSQTK. The helical transmembrane segment at 103 to 122 threads the bilayer; it reads NIVSGVLFGTGLWVAVIMTM. Over 123 to 773 the chain is Cytoplasmic; sequence RYSLKVLLSY…LFGLTINSKK (651 aa). At Y282 the chain carries 3'-nitrotyrosine. H473 acts as the Proton acceptor in catalysis. 555–567 is a CoA binding site; sequence GKGLIKKCRTSPD. Residue T588 is modified to Phosphothreonine. Y589 is subject to 3'-nitrotyrosine. Residues Y589 and T602 each coordinate (R)-carnitine. Phosphothreonine is present on T604. Phosphoserine occurs at positions 741 and 747.

This sequence belongs to the carnitine/choline acetyltransferase family. In terms of assembly, homohexamer and homotrimer. Identified in a complex that contains at least CPT1A, ACSL1 and VDAC1. Also identified in complexes with ACSL1 and VDAC2 and VDAC3. Interacts with ZDHHC4. In terms of tissue distribution, liver and kidney.

The protein resides in the mitochondrion outer membrane. It catalyses the reaction (R)-carnitine + hexadecanoyl-CoA = O-hexadecanoyl-(R)-carnitine + CoA. The enzyme catalyses succinyl-CoA + L-lysyl-[protein] = N(6)-succinyl-L-lysyl-[protein] + CoA + H(+). It functions in the pathway lipid metabolism; fatty acid beta-oxidation. Inhibited by malonyl-CoA. Its function is as follows. Catalyzes the transfer of the acyl group of long-chain fatty acid-CoA conjugates onto carnitine, an essential step for the mitochondrial uptake of long-chain fatty acids and their subsequent beta-oxidation in the mitochondrion. Also possesses a lysine succinyltransferase activity that can regulate enzymatic activity of substrate proteins such as ENO1 and metabolism independent of its classical carnitine O-palmitoyltransferase activity. Plays an important role in hepatic triglyceride metabolism. Also plays a role in inducible regulatory T-cell (iTreg) differentiation once activated by butyryl-CoA that antagonizes malonyl-CoA-mediated CPT1A repression. Sustains the IFN-I response by recruiting ZDHCC4 to palmitoylate MAVS at the mitochondria leading to MAVS stabilization and activation. This is Carnitine O-palmitoyltransferase 1, liver isoform (Cpt1a) from Rattus norvegicus (Rat).